We begin with the raw amino-acid sequence, 515 residues long: Membrane-bound lytic murein transglycosylase F (515 aa).

An N-terminal signal peptide occupies residues 1-32 (MKKLKINYLFIGILTLLLAAALWPSIPWFGKA). Positions 33 to 269 (DNRIAAIQSR…RMEEKYLGHG (237 aa)) are non-LT domain. Positions 270-515 (DDFDYVDTRT…PFSLKKKDEN (246 aa)) are LT domain. Residue Glu-314 is part of the active site. Residues 493–515 (QPSSNYLSHSPSLPFSLKKKDEN) are disordered.

This sequence in the N-terminal section; belongs to the bacterial solute-binding protein 3 family. It in the C-terminal section; belongs to the transglycosylase Slt family.

The protein localises to the cell outer membrane. It catalyses the reaction Exolytic cleavage of the (1-&gt;4)-beta-glycosidic linkage between N-acetylmuramic acid (MurNAc) and N-acetylglucosamine (GlcNAc) residues in peptidoglycan, from either the reducing or the non-reducing ends of the peptidoglycan chains, with concomitant formation of a 1,6-anhydrobond in the MurNAc residue.. Murein-degrading enzyme that degrades murein glycan strands and insoluble, high-molecular weight murein sacculi, with the concomitant formation of a 1,6-anhydromuramoyl product. Lytic transglycosylases (LTs) play an integral role in the metabolism of the peptidoglycan (PG) sacculus. Their lytic action creates space within the PG sacculus to allow for its expansion as well as for the insertion of various structures such as secretion systems and flagella. This chain is Membrane-bound lytic murein transglycosylase F, found in Citrobacter koseri (strain ATCC BAA-895 / CDC 4225-83 / SGSC4696).